Reading from the N-terminus, the 187-residue chain is GTP cyclohydrolase 1 (187 aa).

The Zn(2+) site is built by Cys-79, His-82, and Cys-150.

It belongs to the GTP cyclohydrolase I family. Toroid-shaped homodecamer, composed of two pentamers of five dimers.

The catalysed reaction is GTP + H2O = 7,8-dihydroneopterin 3'-triphosphate + formate + H(+). Its pathway is cofactor biosynthesis; 7,8-dihydroneopterin triphosphate biosynthesis; 7,8-dihydroneopterin triphosphate from GTP: step 1/1. The sequence is that of GTP cyclohydrolase 1 from Fusobacterium nucleatum subsp. nucleatum (strain ATCC 25586 / DSM 15643 / BCRC 10681 / CIP 101130 / JCM 8532 / KCTC 2640 / LMG 13131 / VPI 4355).